The chain runs to 735 residues: 1,4-alpha-glucan branching enzyme GlgB (735 aa).

The active-site Nucleophile is Asp414. Glu469 acts as the Proton donor in catalysis.

The protein belongs to the glycosyl hydrolase 13 family. GlgB subfamily. In terms of assembly, monomer.

It carries out the reaction Transfers a segment of a (1-&gt;4)-alpha-D-glucan chain to a primary hydroxy group in a similar glucan chain.. The protein operates within glycan biosynthesis; glycogen biosynthesis. Its function is as follows. Catalyzes the formation of the alpha-1,6-glucosidic linkages in glycogen by scission of a 1,4-alpha-linked oligosaccharide from growing alpha-1,4-glucan chains and the subsequent attachment of the oligosaccharide to the alpha-1,6 position. The protein is 1,4-alpha-glucan branching enzyme GlgB of Burkholderia lata (strain ATCC 17760 / DSM 23089 / LMG 22485 / NCIMB 9086 / R18194 / 383).